The sequence spans 802 residues: Copper-exporting P-type ATPase (802 aa).

HMA domains lie at Lys5 to Ala70 and Glu72 to Ser138. Cu(+)-binding residues include Cys16, Cys19, Cys83, and Cys86. A run of 6 helical transmembrane segments spans residues Leu161–Asn181, Trp192–Gly212, Met224–Val244, Leu256–Ala276, Tyr411–Val431, and Pro438–Ala458. Asp495 serves as the catalytic 4-aspartylphosphate intermediate. The Mg(2+) site is built by Asp690 and Asp694. The next 2 membrane-spanning stretches (helical) occupy residues Leu748–Leu767 and Val771–Leu790.

Belongs to the cation transport ATPase (P-type) (TC 3.A.3) family. Type IB subfamily.

The protein localises to the cell membrane. The catalysed reaction is Cu(+)(in) + ATP + H2O = Cu(+)(out) + ADP + phosphate + H(+). In terms of biological role, involved in copper export. The protein is Copper-exporting P-type ATPase (copA) of Staphylococcus aureus (strain MW2).